The sequence spans 586 residues: Succinate dehydrogenase flavoprotein subunit (586 aa).

Residues 10-15 (GGGLAG) and 33-48 (SIVPVKRSHSVCAQGG) contribute to the FAD site. His-41 is subject to Tele-8alpha-FAD histidine. 2 residues coordinate substrate: His-236 and Ser-250. Residue Arg-285 is the Proton acceptor of the active site. Residue His-352 participates in substrate binding. Glu-376 provides a ligand contact to FAD. Substrate is bound at residue Arg-386. 391–392 (SL) contacts FAD.

Belongs to the FAD-dependent oxidoreductase 2 family. FRD/SDH subfamily. As to quaternary structure, in B.subtilis succinate dehydrogenase forms part of an enzyme complex containing three subunits: a flavoprotein, an iron-sulfur protein and cytochrome b-558. Interacts with FloT. Requires FAD as cofactor.

It localises to the cell membrane. The protein resides in the membrane raft. The catalysed reaction is a quinone + succinate = fumarate + a quinol. The protein operates within carbohydrate metabolism; tricarboxylic acid cycle; fumarate from succinate (bacterial route): step 1/1. The sequence is that of Succinate dehydrogenase flavoprotein subunit (sdhA) from Bacillus subtilis (strain 168).